Reading from the N-terminus, the 242-residue chain is N-glycosylase/DNA lyase (242 aa).

Residues Gln26, Ser53, and Trp64 each contribute to the 8-oxoguanine site. Positions 120 to 184 (EGYYKNMKML…EDLRIKSVTS (65 aa)) are helix-hairpin-helix. Lys144 functions as the Schiff-base intermediate with DNA in the catalytic mechanism. 8-oxoguanine-binding residues include Phe148 and Pro174. Asp176 is an active-site residue. 2 residues coordinate 8-oxoguanine: Asp210 and Trp214.

It belongs to the archaeal N-glycosylase/DNA lyase (AGOG) family.

The catalysed reaction is 2'-deoxyribonucleotide-(2'-deoxyribose 5'-phosphate)-2'-deoxyribonucleotide-DNA = a 3'-end 2'-deoxyribonucleotide-(2,3-dehydro-2,3-deoxyribose 5'-phosphate)-DNA + a 5'-end 5'-phospho-2'-deoxyribonucleoside-DNA + H(+). Functionally, DNA repair enzyme that is part of the base excision repair (BER) pathway; protects from oxidative damage by removing the major product of DNA oxidation, 8-oxoguanine (GO), from single- and double-stranded DNA substrates. The sequence is that of N-glycosylase/DNA lyase from Pyrococcus furiosus (strain ATCC 43587 / DSM 3638 / JCM 8422 / Vc1).